The sequence spans 446 residues: Tubulin alpha chain-like 3 (446 aa).

The MREC motif signature appears at 1–4 (MREC). GTP is bound by residues Q11, E78, S147, G151, T152, T186, N213, and N235. A Mg(2+)-binding site is contributed by E78. E261 is a catalytic residue.

The protein belongs to the tubulin family. As to quaternary structure, dimer of alpha and beta chains. A typical microtubule is a hollow water-filled tube with an outer diameter of 25 nm and an inner diameter of 15 nM. Alpha-beta heterodimers associate head-to-tail to form protofilaments running lengthwise along the microtubule wall with the beta-tubulin subunit facing the microtubule plus end conferring a structural polarity. Microtubules usually have 13 protofilaments but different protofilament numbers can be found in some organisms and specialized cells. Mg(2+) is required as a cofactor. In terms of processing, some glutamate residues at the C-terminus are polyglutamylated, resulting in polyglutamate chains on the gamma-carboxyl group. Polyglutamylation plays a key role in microtubule severing by spastin (SPAST). SPAST preferentially recognizes and acts on microtubules decorated with short polyglutamate tails: severing activity by SPAST increases as the number of glutamates per tubulin rises from one to eight, but decreases beyond this glutamylation threshold. Glutamylation is also involved in cilia motility. Post-translationally, some glutamate residues at the C-terminus are monoglycylated but not polyglycylated due to the absence of functional TTLL10 in human. Monoglycylation is mainly limited to tubulin incorporated into cilia and flagella axonemes, which is required for their stability and maintenance. Flagella glycylation controls sperm motility. Both polyglutamylation and monoglycylation can coexist on the same protein on adjacent residues, and lowering glycylation levels increases polyglutamylation, and reciprocally.

It is found in the cytoplasm. Its subcellular location is the cytoskeleton. The enzyme catalyses GTP + H2O = GDP + phosphate + H(+). Tubulin is the major constituent of microtubules, a cylinder consisting of laterally associated linear protofilaments composed of alpha- and beta-tubulin heterodimers. Microtubules grow by the addition of GTP-tubulin dimers to the microtubule end, where a stabilizing cap forms. Below the cap, tubulin dimers are in GDP-bound state, owing to GTPase activity of alpha-tubulin. This chain is Tubulin alpha chain-like 3 (TUBAL3), found in Homo sapiens (Human).